We begin with the raw amino-acid sequence, 402 residues long: Arginine deiminase (402 aa).

Cys392 (amidino-cysteine intermediate) is an active-site residue.

It belongs to the arginine deiminase family.

It is found in the cytoplasm. The enzyme catalyses L-arginine + H2O = L-citrulline + NH4(+). It participates in amino-acid degradation; L-arginine degradation via ADI pathway; carbamoyl phosphate from L-arginine: step 1/2. The sequence is that of Arginine deiminase from Mycolicibacterium gilvum (strain PYR-GCK) (Mycobacterium gilvum (strain PYR-GCK)).